We begin with the raw amino-acid sequence, 310 residues long: UPF0761 membrane protein VF_0100 (310 aa).

6 helical membrane-spanning segments follow: residues 34-54 (YMAY…LSVL), 97-117 (MTAV…SSID), 136-156 (FSLY…SLAA), 178-198 (LLGW…YLLV), 207-227 (HALI…VGFA), and 242-262 (ALAA…IVLI).

It belongs to the UPF0761 family.

The protein resides in the cell inner membrane. The protein is UPF0761 membrane protein VF_0100 of Aliivibrio fischeri (strain ATCC 700601 / ES114) (Vibrio fischeri).